A 207-amino-acid chain; its full sequence is Small ribosomal subunit protein uS4c (207 aa).

The S4 RNA-binding domain occupies 92–156 (MRLDNILFRL…YQSIITKRIE (65 aa)).

The protein belongs to the universal ribosomal protein uS4 family. In terms of assembly, part of the 30S ribosomal subunit. Contacts protein S5. The interaction surface between S4 and S5 is involved in control of translational fidelity.

Its subcellular location is the plastid. It localises to the chloroplast. Functionally, one of the primary rRNA binding proteins, it binds directly to 16S rRNA where it nucleates assembly of the body of the 30S subunit. In terms of biological role, with S5 and S12 plays an important role in translational accuracy. This Equisetum arvense (Field horsetail) protein is Small ribosomal subunit protein uS4c (rps4).